A 347-amino-acid polypeptide reads, in one-letter code: N-acetyl-gamma-glutamyl-phosphate reductase (347 aa).

Cys-150 is a catalytic residue.

The protein belongs to the NAGSA dehydrogenase family. Type 1 subfamily.

Its subcellular location is the cytoplasm. The enzyme catalyses N-acetyl-L-glutamate 5-semialdehyde + phosphate + NADP(+) = N-acetyl-L-glutamyl 5-phosphate + NADPH + H(+). It participates in amino-acid biosynthesis; L-arginine biosynthesis; N(2)-acetyl-L-ornithine from L-glutamate: step 3/4. Functionally, catalyzes the NADPH-dependent reduction of N-acetyl-5-glutamyl phosphate to yield N-acetyl-L-glutamate 5-semialdehyde. This Leifsonia xyli subsp. xyli (strain CTCB07) protein is N-acetyl-gamma-glutamyl-phosphate reductase.